Reading from the N-terminus, the 399-residue chain is uncharacterized protein (399 aa).

Belongs to the NADH:flavin oxidoreductase/NADH oxidase family. Directly interacts with lipoylated GcvH-L (SpyM50867).

This is an uncharacterized protein from Streptococcus pyogenes serotype M5 (strain Manfredo).